A 951-amino-acid chain; its full sequence is Pentatricopeptide repeat-containing protein At4g19220, mitochondrial (951 aa).

A mitochondrion-targeting transit peptide spans 1 to 63 (MLLVMVRSST…RHFTSSVLSP (63 aa)). PPR repeat units follow at residues 121–151 (DLAT…LKEK), 152–186 (DVIV…GNEF), 187–221 (DSTT…GLVG), 222–252 (DSSL…MEHR), 253–287 (DIVS…GQEA), 288–322 (DTVT…GYSP), 325–355 (HVSV…LVCR), 356–386 (DVIS…MQSV), 392–426 (DIAT…EMQS), 428–458 (ALEV…TTHR), 459–489 (DLVS…VVSE), 496–530 (SLST…GFGD), 531–561 (NMLS…MSET), 563–597 (DLTS…GKIR), 599–629 (DLIT…AIKS), 634–668 (DTQL…NLCS), 669–695 (WNCV…LKLE), 697–731 (NEIT…GFQA), 732–762 (NPFV…SGVN), 763–793 (SISA…LSSN), 799–829 (NKSS…MEEK), and 835–865 (VTEH…IGEP). The type E motif stretch occupies residues 870-945 (VWGALLSACN…LPGYSVIDVR (76 aa)).

It belongs to the PPR family. PCMP-E subfamily.

It localises to the mitochondrion. The chain is Pentatricopeptide repeat-containing protein At4g19220, mitochondrial (PCMP-E2) from Arabidopsis thaliana (Mouse-ear cress).